A 260-amino-acid chain; its full sequence is Salicylic acid-binding protein 2 (260 aa).

The salicylate site is built by A13, S81, and K159. S81 serves as the catalytic Acyl-ester intermediate. Residues D210 and H238 each act as charge relay system in the active site. Residues H238, L253, and H257 each contribute to the salicylate site.

Belongs to the AB hydrolase superfamily. Methylesterase family.

The catalysed reaction is methyl salicylate + H2O = salicylate + methanol + H(+). Its pathway is plant hormone biosynthesis. With respect to regulation, esterase activity is down-regulated by salicylic acid (SA) or by tetraFA, a synthetic SA analog. Its function is as follows. Required to convert methyl salicylate (MeSA) to salicylic acid (SA) as part of the signal transduction pathways that activate systemic acquired resistance in systemic tissue. MeSA is believed to be an inactive form that needs to be demethylated to exert a biological effect. Also able to catalyze the conversion of acibenzolar-S-methyl into acibenzolar to induce systemic acquired resistance. The chain is Salicylic acid-binding protein 2 from Nicotiana tabacum (Common tobacco).